We begin with the raw amino-acid sequence, 468 residues long: Purple acid phosphatase 10 (468 aa).

Positions 1–25 (MGRVRKSDFGSIVLVLCCVLNSLLC) are cleaved as a signal peptide. N-linked (GlcNAc...) asparagine glycans are attached at residues Asn95 and Asn113. Asp167 is a Fe cation binding site. Residue Asn175 is glycosylated (N-linked (GlcNAc...) asparagine). Residues Asp196 and Tyr199 each coordinate Fe cation. Asp196 provides a ligand contact to Zn(2+). Residue Asn233 coordinates Zn(2+). Asn233 serves as a coordination point for substrate. Residue Asn306 is glycosylated (N-linked (GlcNAc...) asparagine). Position 318 (His318) interacts with Zn(2+). The active-site Proton donor is the His328. His355 serves as a coordination point for Zn(2+). 355–357 (HVH) provides a ligand contact to substrate. His357 is a binding site for Fe cation. N-linked (GlcNAc...) asparagine glycosylation occurs at Asn428.

It belongs to the metallophosphoesterase superfamily. Purple acid phosphatase family. As to quaternary structure, homodimer; disulfide-linked. The cofactor is Fe cation. It depends on Zn(2+) as a cofactor. Expressed in roots, stems, leaves, flowers and siliques.

It localises to the secreted. The protein localises to the cytoplasm. The enzyme catalyses a phosphate monoester + H2O = an alcohol + phosphate. In Arabidopsis thaliana (Mouse-ear cress), this protein is Purple acid phosphatase 10 (PAP10).